A 598-amino-acid chain; its full sequence is Elongation factor 4 (598 aa).

Positions Gln3 to Glu185 constitute a tr-type G domain. GTP contacts are provided by residues Asp15–Thr20 and Asn132–Asp135.

This sequence belongs to the TRAFAC class translation factor GTPase superfamily. Classic translation factor GTPase family. LepA subfamily.

The protein resides in the cell inner membrane. The catalysed reaction is GTP + H2O = GDP + phosphate + H(+). Required for accurate and efficient protein synthesis under certain stress conditions. May act as a fidelity factor of the translation reaction, by catalyzing a one-codon backward translocation of tRNAs on improperly translocated ribosomes. Back-translocation proceeds from a post-translocation (POST) complex to a pre-translocation (PRE) complex, thus giving elongation factor G a second chance to translocate the tRNAs correctly. Binds to ribosomes in a GTP-dependent manner. The chain is Elongation factor 4 from Nitrosomonas europaea (strain ATCC 19718 / CIP 103999 / KCTC 2705 / NBRC 14298).